The primary structure comprises 145 residues: Large ribosomal subunit protein uL15 (145 aa).

Positions 1-18 are enriched in basic and acidic residues; that stretch reads MKLHELKYTEGSKKDVTR. The tract at residues 1–51 is disordered; it reads MKLHELKYTEGSKKDVTRVGRGMASGKGKTSTRGHKGQNSRSGGGVRVGFE. Residues 42-51 are compositionally biased toward gly residues; the sequence is SGGGVRVGFE.

This sequence belongs to the universal ribosomal protein uL15 family. As to quaternary structure, part of the 50S ribosomal subunit.

In terms of biological role, binds to the 23S rRNA. In Mesoplasma florum (strain ATCC 33453 / NBRC 100688 / NCTC 11704 / L1) (Acholeplasma florum), this protein is Large ribosomal subunit protein uL15.